A 901-amino-acid polypeptide reads, in one-letter code: MFSAIARKLFGSRNDRYLRSLQPLVDRINGLEAEYEALSDSELTAMTYAFKARLEKGETLDDLLPEAFAVVREGSKRVLGMRHYDVQLIGGIVLHQGKISEMKTGEGKTLVATLSLYLNALSGKGAHLVTVNDYLARRDAEWMGKLYQFLGLSVGVIIHGIEDQQRKAAYNADITYGTNNEFGFDYLRDNMKFSLEEMVQRPLNYAIVDEVDSILVDEARTPLIISGPTEDSTDKYYKVDRLIPQLEKERHYTLDEKQRSVTFTEEGNEQIEQLMRQAGLLRDGDLYDLHNIEMVHHVNQALKAHAMFEVDRDYIVKDGQVVIIDEFTGRMMPGRRYSDGLHQALEAKEQVVIQNESQTLASITFQNLFRLYNKLAGMTGTADTEAAEFQSIYNLEVVIIPTNRDMVRIDRDDMVFRTLEEKLKAVAEDIKVSYEKGQPVLVGTVSIEKSEMVSHFLKKLKIPHEILNAKHHEREAEIVAQAGRPRAVTIATNMAGRGTDIQLGGNLEMRLKKEIDPEASPAERTQQEIQIRTEYEQDKALVLASGGLHIIGTERHESRRIDNQLRGRAGRQGDPGSSGFYLSLQDDLMRIFGSERMDGMLKKLGLQDGEAIVHPWINKAVESAQKKVEGRNFDIRKNLLKFDDVMNEQRKVIYDQRKELMENEDIRDFIDEIREEVVHALVDSHLGEDVYPEEWDAKGFREAMLNQFNLDLNVESWKHEEGVTHLVAKERAMAAVKAYSEAREARLGPPLMRYLEKSIMLQVLDTLWKEHLLNMDHLKEGIHLRGYAQKDPLNEYKREAFQLFSMLLQRIREEAIEFLGKVEVQQPEEVAAYEAELAEARNQQMSLNHPESGSWGGEGEGPSSEGAPHLPFKRDGEKVGRNQACPCGSGKKYKQCCGKLS.

ATP contacts are provided by residues Q87, 105–109 (GEGKT), and D500. The tract at residues 847–901 (LNHPESGSWGGEGEGPSSEGAPHLPFKRDGEKVGRNQACPCGSGKKYKQCCGKLS) is disordered. Zn(2+) contacts are provided by C885, C887, C896, and C897.

Belongs to the SecA family. As to quaternary structure, monomer and homodimer. Part of the essential Sec protein translocation apparatus which comprises SecA, SecYEG and auxiliary proteins SecDF-YajC and YidC. It depends on Zn(2+) as a cofactor.

The protein localises to the cell inner membrane. It localises to the cytoplasm. It catalyses the reaction ATP + H2O + cellular proteinSide 1 = ADP + phosphate + cellular proteinSide 2.. In terms of biological role, part of the Sec protein translocase complex. Interacts with the SecYEG preprotein conducting channel. Has a central role in coupling the hydrolysis of ATP to the transfer of proteins into and across the cell membrane, serving both as a receptor for the preprotein-SecB complex and as an ATP-driven molecular motor driving the stepwise translocation of polypeptide chains across the membrane. The protein is Protein translocase subunit SecA 1 of Magnetococcus marinus (strain ATCC BAA-1437 / JCM 17883 / MC-1).